Reading from the N-terminus, the 103-residue chain is Large ribosomal subunit protein bL21 (103 aa).

It belongs to the bacterial ribosomal protein bL21 family. As to quaternary structure, part of the 50S ribosomal subunit. Contacts protein L20.

In terms of biological role, this protein binds to 23S rRNA in the presence of protein L20. This is Large ribosomal subunit protein bL21 from Bordetella petrii (strain ATCC BAA-461 / DSM 12804 / CCUG 43448).